A 343-amino-acid chain; its full sequence is Adenine deaminase (343 aa).

Zn(2+)-binding residues include His17, His19, and His197. The active-site Proton donor is the Glu200. Zn(2+) is bound at residue Asp278. Residue Asp279 coordinates substrate.

This sequence belongs to the metallo-dependent hydrolases superfamily. Adenosine and AMP deaminases family. Adenine deaminase type 2 subfamily. The cofactor is Zn(2+).

It carries out the reaction adenine + H2O + H(+) = hypoxanthine + NH4(+). Its function is as follows. Catalyzes the hydrolytic deamination of adenine to hypoxanthine. Plays an important role in the purine salvage pathway and in nitrogen catabolism. The chain is Adenine deaminase from Rhodopseudomonas palustris (strain BisB18).